We begin with the raw amino-acid sequence, 178 residues long: Caveolin-1 (178 aa).

Residue Ser2 is modified to N-acetylserine. The residue at position 2 (Ser2) is a Phosphoserine. The tract at residues 2 to 94 (SGGKYVDSEG…WKASFTTFTV (93 aa)) is required for homooligomerization. Over 2 to 104 (SGGKYVDSEG…TKYWFYRLLS (103 aa)) the chain is Cytoplasmic. Lys5 carries the N6-acetyllysine; alternate modification. Residue Lys5 forms a Glycyl lysine isopeptide (Lys-Gly) (interchain with G-Cter in ubiquitin); alternate linkage. Tyr6 carries the phosphotyrosine modification. The residue at position 9 (Ser9) is a Phosphoserine. Position 14 is a phosphotyrosine; by ABL1 (Tyr14). Tyr25 bears the Phosphotyrosine mark. Residues Lys26, Lys30, Lys39, Lys47, and Lys57 each participate in a glycyl lysine isopeptide (Lys-Gly) (interchain with G-Cter in ubiquitin) cross-link. Positions 82–94 (DGIWKASFTTFTV) are interaction with CAVIN3. Residues 105 to 125 (AVFGIPMALIWGIYFAIVSFL) constitute an intramembrane region (helical). At 126-178 (HIWVVVPYIKSFLIEIQCISRVYSIYIHTFCDPLFEAFGKVFSNIRINTQKEI) the chain is on the cytoplasmic side. Positions 131–142 (VPYIKSFLIEIQ) are interacts with SPRY1, SPRY2, SPRY3 and SPRY4. Residues Cys143 and Cys156 are each lipidated (S-palmitoyl cysteine). Residues 149–160 (SIYIHTFCDPLF) form an interacts with SPRY1, SPRY2, and SPRY4 region. The interval 167-178 (FSNIRINTQKEI) is interacts with SPRY1, SPRY2, SPRY3 and SPRY4.

This sequence belongs to the caveolin family. As to quaternary structure, homooligomer. Interacts (via the N-terminus) with DPP4; the interaction is direct. Forms a stable heterooligomeric complex with CAV2 that targets to lipid rafts and drives caveolae formation. Interacts with PACSIN2; this interaction induces membrane tubulation. Interacts with BMX, BTK, CTNNB1, CDH1, GLIPR2, JUP, NOSTRIN, SNAP25 and STX1A. Interacts with SLC7A9. Interacts with TGFBR1. Interacts with CAVIN3 (via leucine-zipper domain) in a cholesterol-sensitive manner. Interacts with CAVIN1. Interacts with EHD2 in a cholesterol-dependent manner. Forms a ternary complex with UBXN6 and VCP; mediates CAV1 targeting to lysosomes for degradation. Interacts with ABCG1; this interaction regulates ABCG1-mediated cholesterol efflux. Interacts with NEU3; this interaction enhances NEU3 sialidase activity within caveola. Interacts (via C-terminus) with SPRY1, SPRY2 (via C-terminus), SPRY3, and SPRY4. Post-translationally, phosphorylated at Tyr-14 by ABL1 in response to oxidative stress. Ubiquitinated. Undergo monoubiquitination and multi- and/or polyubiquitination. Monoubiquitination of N-terminal lysines promotes integration in a ternary complex with UBXN6 and VCP which promotes oligomeric CAV1 targeting to lysosomes for degradation. Ubiquitinated by ZNRF1; leading to degradation and modulation of the TLR4-mediated immune response.

The protein resides in the golgi apparatus membrane. It localises to the cell membrane. It is found in the membrane. The protein localises to the caveola. Its subcellular location is the membrane raft. In terms of biological role, may act as a scaffolding protein within caveolar membranes. Forms a stable heterooligomeric complex with CAV2 that targets to lipid rafts and drives caveolae formation. Mediates the recruitment of CAVIN proteins (CAVIN1/2/3/4) to the caveolae. Interacts directly with G-protein alpha subunits and can functionally regulate their activity. Involved in the costimulatory signal essential for T-cell receptor (TCR)-mediated T-cell activation. Its binding to DPP4 induces T-cell proliferation and NF-kappa-B activation in a T-cell receptor/CD3-dependent manner. Recruits CTNNB1 to caveolar membranes and may regulate CTNNB1-mediated signaling through the Wnt pathway. Negatively regulates TGFB1-mediated activation of SMAD2/3 by mediating the internalization of TGFBR1 from membrane rafts leading to its subsequent degradation. Binds 20(S)-hydroxycholesterol (20(S)-OHC). This Rhinolophus ferrumequinum (Greater horseshoe bat) protein is Caveolin-1 (CAV1).